The sequence spans 200 residues: MGGKWSKSSIVGWPNVRERMRAAEGVGKVSQDLDKHGAITSSNTRATNADLAWLEAQEEEVGFPVRPQVPLRPMTYKAAVDLSHFLKEKGGLEGLIYSKKRQEILDLWVYHTQGYFPDWQNYTPGPGIRYPLTLGWCFKLVPVDPEEIEKANEGENNCLLHPISLHGMEDEDREVLRWKFDSSLALRHVARERHPEFYQD.

Glycine 2 carries the N-myristoyl glycine; by host lipid modification. Position 6 is a phosphoserine; by host (serine 6). Positions 58-60 (EEE) are acidic; interacts with host PACS1 and PACS2; stabilizes the interaction of NEF/MHC-I with host AP1M1; necessary for MHC-I internalization. The interval 64–73 (PVRPQVPLRP) is SH3-binding; interaction with Src family tyrosine kinases. The short motif at 67–70 (PQVP) is the PxxP; stabilizes the interaction of NEF/MHC-I with host AP1M1; necessary for MHC-I internalization element. Residues 103–119 (EILDLWVYHTQGYFPDW) are mediates dimerization, Nef-PTE1 interaction. The segment at 143–175 (VDPEEIEKANEGENNCLLHPISLHGMEDEDREV) is binding to ATP6V1H. Residues 159 to 160 (LL) carry the Dileucine internalization motif; necessary for CD4 internalization motif. Positions 169 to 170 (ED) match the Diacidic; necessary for CD4 internalization motif.

It belongs to the lentivirus primate group Nef protein family. As to quaternary structure, monomer; cytosolic form. Homodimer; membrane bound form. Interacts with Nef associated p21-activated kinase (PAK2); this interaction activates PAK2. Associates with the Nef-MHC-I-AP1 complex; this complex is required for MHC-I internalization. Interacts (via C-terminus) with host PI3-kinase. Interacts with host PACS1; this interaction seems to be weak. Interacts with host PACS2. Interacts with host LCK and MAPK3; these interactions inhibit the kinase activity of the latter. Interacts with host ATP6V1H; this interaction may play a role in CD4 endocytosis. Associates with the CD4-Nef-AP2 complex; this complex is required for CD4 internalization. Interacts with host AP2 subunit alpha and AP2 subunit sigma2. Interacts with TCR-zeta chain; this interaction up-regulates the Fas ligand (FasL) surface expression. Interacts with host HCK, LYN, and SRC; these interactions activate the Src family kinases. Interacts with MAP3K5; this interaction inhibits the Fas and TNFR-mediated death signals. Interacts with beta-COP and PTE1. Interacts with human RACK1; this increases Nef phosphorylation by PKC. Interacts with TP53; this interaction decreases the half-life of TP53, protecting the infected cell against p53-mediated apoptosis. Post-translationally, the virion-associated Nef proteins are cleaved by the viral protease to release the soluble C-terminal core protein. Nef is probably cleaved concomitantly with viral structural proteins on maturation of virus particles. Myristoylated. In terms of processing, phosphorylated on serine residues, probably by host PKCdelta and theta.

It localises to the host cell membrane. It is found in the virion. The protein resides in the secreted. Its subcellular location is the host Golgi apparatus membrane. Factor of infectivity and pathogenicity, required for optimal virus replication. Alters numerous pathways of T-lymphocyte function and down-regulates immunity surface molecules in order to evade host defense and increase viral infectivity. Alters the functionality of other immunity cells, like dendritic cells, monocytes/macrophages and NK cells. In terms of biological role, in infected CD4(+) T-lymphocytes, down-regulates the surface MHC-I, mature MHC-II, CD4, CD28, CCR5 and CXCR4 molecules. Mediates internalization and degradation of host CD4 through the interaction of with the cytoplasmic tail of CD4, the recruitment of AP-2 (clathrin adapter protein complex 2), internalization through clathrin coated pits, and subsequent transport to endosomes and lysosomes for degradation. Diverts host MHC-I molecules to the trans-Golgi network-associated endosomal compartments by an endocytic pathway to finally target them for degradation. MHC-I down-regulation may involve AP-1 (clathrin adapter protein complex 1) or possibly Src family kinase-ZAP70/Syk-PI3K cascade recruited by PACS2. In consequence infected cells are masked for immune recognition by cytotoxic T-lymphocytes. Decreasing the number of immune receptors also prevents reinfection by more HIV particles (superinfection). Down-regulates host SERINC3 and SERINC5 thereby excluding these proteins from the viral particles. Virion infectivity is drastically higher when SERINC3 or SERINC5 are excluded from the viral envelope, because these host antiviral proteins impair the membrane fusion event necessary for subsequent virion penetration. Functionally, bypasses host T-cell signaling by inducing a transcriptional program nearly identical to that of anti-CD3 cell activation. Interaction with TCR-zeta chain up-regulates the Fas ligand (FasL). Increasing surface FasL molecules and decreasing surface MHC-I molecules on infected CD4(+) cells send attacking cytotoxic CD8+ T-lymphocytes into apoptosis. Its function is as follows. Plays a role in optimizing the host cell environment for viral replication without causing cell death by apoptosis. Protects the infected cells from apoptosis in order to keep them alive until the next virus generation is ready to strike. Inhibits the Fas and TNFR-mediated death signals by blocking MAP3K5/ASK1. Decreases the half-life of TP53, protecting the infected cell against p53-mediated apoptosis. Inhibits the apoptotic signals regulated by the Bcl-2 family proteins through the formation of a Nef/PI3-kinase/PAK2 complex that leads to activation of PAK2 and induces phosphorylation of host BAD. Extracellular Nef protein targets CD4(+) T-lymphocytes for apoptosis by interacting with CXCR4 surface receptors. In Human immunodeficiency virus type 1 group M subtype F2 (isolate MP255) (HIV-1), this protein is Protein Nef.